A 451-amino-acid chain; its full sequence is Speckle-type POZ protein homolog (451 aa).

Positions 51–75 are disordered; it reads EVVSSGSGNSAHGRSISPSPSSASH. Over residues 60–75 the composition is skewed to low complexity; that stretch reads SAHGRSISPSPSSASH. Residues 95 to 225 form the MATH domain; the sequence is KFNYMWTINN…GDRLSIFCEV (131 aa). In terms of domain architecture, BTB spans 265–338; sequence SDFTLVCKSD…MYTGQTKYIE (74 aa).

This sequence belongs to the Tdpoz family.

The protein resides in the nucleus. Its subcellular location is the nucleus speckle. It functions in the pathway protein modification; protein ubiquitination. Mediates ubiquitination and proteasomal degradation of target proteins, most likely in complex with cul-3. May promote the degradation of bromodomain-containing proteins such as bet-1. In Caenorhabditis elegans, this protein is Speckle-type POZ protein homolog.